The sequence spans 165 residues: Putative defense protein Hdd11 (165 aa).

Residues 1 to 17 (MWATYVFIAVSLACANG) form the signal peptide. A Reelin domain is found at 18 to 165 (YSSGAPESVC…VESGPVKVIS (148 aa)). C27 and C104 are disulfide-bonded.

The protein belongs to the insect defense protein family.

Its subcellular location is the secreted. In terms of biological role, as this protein is expressed upon bacterial infection, it may have antimicrobial activity. In Hyphantria cunea (Fall webworm moth), this protein is Putative defense protein Hdd11.